The chain runs to 222 residues: 7-cyano-7-deazaguanine synthase (222 aa).

8 to 18 is a binding site for ATP; that stretch reads LSGGLDSTTCL. C186, C194, C197, and C200 together coordinate Zn(2+).

The protein belongs to the QueC family. In terms of assembly, homodimer. It depends on Zn(2+) as a cofactor.

It catalyses the reaction 7-carboxy-7-deazaguanine + NH4(+) + ATP = 7-cyano-7-deazaguanine + ADP + phosphate + H2O + H(+). Its pathway is purine metabolism; 7-cyano-7-deazaguanine biosynthesis. Catalyzes the ATP-dependent conversion of 7-carboxy-7-deazaguanine (CDG) to 7-cyano-7-deazaguanine (preQ(0)). The sequence is that of 7-cyano-7-deazaguanine synthase from Acetivibrio thermocellus (strain ATCC 27405 / DSM 1237 / JCM 9322 / NBRC 103400 / NCIMB 10682 / NRRL B-4536 / VPI 7372) (Clostridium thermocellum).